A 395-amino-acid chain; its full sequence is MEKKLKRRESMSTTAAESPPAKRRRTVTGNENSALIEGLPDHISEICLSLVHRPSLLSAVCTRWRRLLYSPEFPSFPSLYALFVDSTSDTGRVNPSVRFMCFNPVSSKWYPLPPPPPDPPLHRILYRHPSFISFNLPIQCVSAAGKLILIAGSNQQLSPAISHPLIFDPISSSWSSGPRIGSPRRWCATGACDGAIYIASGISSQFSSTVAKSVEKLDLTEQNRNNHRFNWEKLRDMRDLRFSREAIDAVGYRRKLLMVNVKGDAVKEGAIYDVVKDDWEPMPEEMLVGWRGPVAAMEEEILYSVDERRGTVRKYDDEKREWREVVVVEGGEEMLKGATQVTADSGKLCVVTGDGKIVVVDVAAEPAKIWNVEIPDGLEPVSVHVLPRMSQPNFC.

Positions 1–29 are disordered; it reads MEKKLKRRESMSTTAAESPPAKRRRTVTG. The 46-residue stretch at 34 to 79 folds into the F-box domain; the sequence is ALIEGLPDHISEICLSLVHRPSLLSAVCTRWRRLLYSPEFPSFPSL. Kelch repeat units lie at residues 81–129, 147–194, 196–245, 246–299, and 301–342; these read ALFV…YRHP, LILI…ACDG, IYIA…FSRE, AIDA…AMEE, and ILYS…TQVT.

Part of a SCF (ASK-cullin-F-box) protein ligase complex. Interacts with SKP1A/ASK1.

The protein resides in the nucleus. It functions in the pathway protein modification; protein ubiquitination. Functionally, component of SCF(ASK-cullin-F-box) E3 ubiquitin ligase complexes, which may mediate the ubiquitination and subsequent proteasomal degradation of target proteins. This Arabidopsis thaliana (Mouse-ear cress) protein is F-box/kelch-repeat protein SKIP25 (SKIP25).